An 896-amino-acid chain; its full sequence is Microsomal triglyceride transfer protein large subunit (896 aa).

The signal sequence occupies residues 1 to 21 (MILLAVLFLCFFSSYSASVKG). Residues 28–659 (LNNERLYKLT…IFQYIGKAEL (632 aa)) enclose the Vitellogenin domain. Cysteines 174 and 194 form a disulfide.

As to quaternary structure, heterodimer; heterodimerizes with the protein disulfide isomerase (P4HB/PDI). Interacts with APOB. Interacts with PRAP1.

It is found in the endoplasmic reticulum. The protein localises to the golgi apparatus. The enzyme catalyses a 1,2-diacyl-sn-glycero-3-phosphocholine(in) = a 1,2-diacyl-sn-glycero-3-phosphocholine(out). It catalyses the reaction a 1,2-diacyl-sn-glycero-3-phosphoethanolamine(in) = a 1,2-diacyl-sn-glycero-3-phosphoethanolamine(out). The catalysed reaction is a cholesterol ester(in) = a cholesterol ester(out). It carries out the reaction a triacyl-sn-glycerol(in) = a triacyl-sn-glycerol(out). In terms of biological role, catalyzes the transport of triglyceride, cholesteryl ester, and phospholipid between phospholipid surfaces. Required for the assembly and secretion of plasma lipoproteins that contain apolipoprotein B. May be involved in regulating cholesteryl ester biosynthesis in cells that produce lipoproteins. The protein is Microsomal triglyceride transfer protein large subunit (Mttp) of Rattus norvegicus (Rat).